Consider the following 201-residue polypeptide: MSSNDQQRGGVADKALQLVMEMKRNPDVLPPYNADLVRQCQKKIDELFHKNAAVVERMRNGLEHDPSLLQPRLAAMCHIRRCMMAYVNERKNRIRSFRWRYGGALPASVRNALCEAEIQFFNEYSSTLARFQSNLGEAGVNLLLHTAPPKTLFVQVRTLEDYGEFETSDGTQVQLTKDSLHSLPRQDCEMLIRQGVLELVH.

The protein belongs to the GINS1/PSF1 family. In terms of assembly, component of the GINS complex which is a heterotetramer of gins1, gins2, gins3 and gins4.

The protein resides in the nucleus. Functionally, the GINS complex plays an essential role in the initiation of DNA replication. This is Probable DNA replication complex GINS protein PSF1 from Caenorhabditis briggsae.